The primary structure comprises 496 residues: Cobyric acid synthase (496 aa).

Positions 257 to 447 constitute a GATase cobBQ-type domain; that stretch reads KINVAIILLK…MHGILDNPAV (191 aa). Residue Cys338 is the Nucleophile of the active site. His439 is an active-site residue.

The protein belongs to the CobB/CobQ family. CobQ subfamily.

Its pathway is cofactor biosynthesis; adenosylcobalamin biosynthesis. In terms of biological role, catalyzes amidations at positions B, D, E, and G on adenosylcobyrinic A,C-diamide. NH(2) groups are provided by glutamine, and one molecule of ATP is hydrogenolyzed for each amidation. The polypeptide is Cobyric acid synthase (Parabacteroides distasonis (strain ATCC 8503 / DSM 20701 / CIP 104284 / JCM 5825 / NCTC 11152)).